Reading from the N-terminus, the 388-residue chain is Alpha-2B adrenergic receptor (388 aa).

A helical transmembrane segment spans residues 1–25 (AIAAVITFLILFTIFGNALVILAVL). Over 26–36 (TSRSLRAPQNL) the chain is Cytoplasmic. Residues 37–62 (FLVSLAAADILVATLIIPFSLANELL) traverse the membrane as a helical segment. The Extracellular segment spans residues 63–72 (GYWYFRRTWC). A disulfide bond links C72 and C151. The chain crosses the membrane as a helical span at residues 73–95 (EVYLALDVLFCTSSIVHLCAISL). Residues 96–117 (DRYWAVSRALEYNSKRTPRXIK) are Cytoplasmic-facing. A helical transmembrane segment spans residues 118–140 (CIILTVWLIAAAISLPPLIYKGD). Topologically, residues 141 to 156 (QGPQPRGRPQCKLNQE) are extracellular. The helical transmembrane segment at 157 to 180 (AWYILSSSIGSFFAPCLIMILVYL) threads the bilayer. The Cytoplasmic segment spans residues 181 to 352 (RIYVIAKRSN…LTREKRFTFV (172 aa)). A disordered region spans residues 193 to 309 (GPRAKGASRE…ASACNPPLQQ (117 aa)). The span at 239-249 (PTGEKEGKTPE) shows a compositional bias: basic and acidic residues. Positions 279-291 (PEEEAEEEEEECE) are enriched in acidic residues. The span at 292–302 (PQAAPASSASA) shows a compositional bias: low complexity. The chain crosses the membrane as a helical span at residues 353–376 (LAVVIGVFVLCWFPFFFSYSLGAI). At 377-385 (CPQRCKVPH) the chain is on the extracellular side. The chain crosses the membrane as a helical span at residues 386-388 (GLF).

It belongs to the G-protein coupled receptor 1 family. Adrenergic receptor subfamily. ADRA2B sub-subfamily. As to quaternary structure, interacts with RAB26. Interacts with PPP1R9B.

Its subcellular location is the cell membrane. In terms of biological role, alpha-2 adrenergic receptors mediate the catecholamine-induced inhibition of adenylate cyclase through the action of G proteins. The chain is Alpha-2B adrenergic receptor (ADRA2B) from Orycteropus afer (Aardvark).